An 826-amino-acid chain; its full sequence is Capsid-associated protein Vp91 (826 aa).

Positions 1–18 (MSDVVLLVLAIIFIIIFV) are cleaved as a signal peptide. A C2HC BV-type zinc finger spans residues 147-196 (CVPINPCDTRAPGLYAMDEHLLDALVHSQHLDKDYTINAHLQHPTLYLRC). Intrachain disulfides connect Cys207–Cys220 and Cys260–Cys273. Asn210 is a glycosylation site (N-linked (GlcNAc...) asparagine; by host). A Chitin-binding type-2 domain is found at 223 to 281 (NELCQGRPDGYVLDYFPETLLVNEFVECYESKHVVKQCPEQHVFDRQLMTCVQAHPCAF). Residues Asn333, Asn371, Asn413, Asn510, Asn520, and Asn609 are each glycosylated (N-linked (GlcNAc...) asparagine; by host). The interval 651-679 (GDGDHWGPDLPPPVQPDSEPDESEPEPEV) is disordered. The span at 668 to 677 (SEPDESEPEP) shows a compositional bias: acidic residues. An N-linked (GlcNAc...) asparagine; by host glycan is attached at Asn722.

It is found in the virion. Its function is as follows. Probable capsid-associated protein. This chain is Capsid-associated protein Vp91, found in Epiphyas postvittana nucleopolyhedrovirus (EppoMNPV).